Consider the following 179-residue polypeptide: Large ribosomal subunit protein uL5 (179 aa).

This sequence belongs to the universal ribosomal protein uL5 family. Part of the 50S ribosomal subunit; part of the 5S rRNA/L5/L18/L25 subcomplex. Contacts the 5S rRNA and the P site tRNA. Forms a bridge to the 30S subunit in the 70S ribosome.

In terms of biological role, this is one of the proteins that bind and probably mediate the attachment of the 5S RNA into the large ribosomal subunit, where it forms part of the central protuberance. In the 70S ribosome it contacts protein S13 of the 30S subunit (bridge B1b), connecting the 2 subunits; this bridge is implicated in subunit movement. Contacts the P site tRNA; the 5S rRNA and some of its associated proteins might help stabilize positioning of ribosome-bound tRNAs. The polypeptide is Large ribosomal subunit protein uL5 (Prochlorococcus marinus (strain NATL1A)).